The primary structure comprises 364 residues: Carbamoyl phosphate synthase pyrimidine-specific small chain (364 aa).

The interval Met-1–Asn-169 is CPSase. 3 residues coordinate L-glutamine: Ser-45, Gly-217, and Gly-219. The 188-residue stretch at Asn-169–Thr-356 folds into the Glutamine amidotransferase type-1 domain. Cys-244 acts as the Nucleophile in catalysis. L-glutamine contacts are provided by Leu-245, Gln-248, Asn-286, Gly-288, and Tyr-289. Catalysis depends on residues His-329 and Asp-331.

Belongs to the CarA family. In terms of assembly, composed of two chains; the small (or glutamine) chain promotes the hydrolysis of glutamine to ammonia, which is used by the large (or ammonia) chain to synthesize carbamoyl phosphate. Tetramer of heterodimers (alpha,beta)4.

It catalyses the reaction hydrogencarbonate + L-glutamine + 2 ATP + H2O = carbamoyl phosphate + L-glutamate + 2 ADP + phosphate + 2 H(+). The enzyme catalyses L-glutamine + H2O = L-glutamate + NH4(+). The protein operates within pyrimidine metabolism; UMP biosynthesis via de novo pathway; (S)-dihydroorotate from bicarbonate: step 1/3. With respect to regulation, inhibited by pyrimidine. Its function is as follows. Small subunit of the glutamine-dependent carbamoyl phosphate synthetase (CPSase). CPSase catalyzes the formation of carbamoyl phosphate from the ammonia moiety of glutamine, carbonate, and phosphate donated by ATP, constituting the first step of the biosynthetic pathway leading to pyrimidine nucleotides. The small subunit (glutamine amidotransferase) binds and cleaves glutamine to supply the large subunit with the substrate ammonia. This is Carbamoyl phosphate synthase pyrimidine-specific small chain from Lactiplantibacillus plantarum (strain ATCC BAA-793 / NCIMB 8826 / WCFS1) (Lactobacillus plantarum).